The following is a 214-amino-acid chain: Cell division protein SepF (214 aa).

Positions 23–70 are disordered; sequence YYDDRAPSRGFPRPRFDDGYGRYDGDDYDDPRREPADCPPPAGYRGGY. The segment covering 36 to 58 has biased composition (basic and acidic residues); the sequence is PRFDDGYGRYDGDDYDDPRREPA.

The protein belongs to the SepF family. In terms of assembly, homodimer. Interacts with FtsZ.

It localises to the cytoplasm. Its function is as follows. Cell division protein that is part of the divisome complex and is recruited early to the Z-ring. Probably stimulates Z-ring formation, perhaps through the cross-linking of FtsZ protofilaments. Its function overlaps with FtsA. In Mycolicibacterium paratuberculosis (strain ATCC BAA-968 / K-10) (Mycobacterium paratuberculosis), this protein is Cell division protein SepF.